The chain runs to 184 residues: Ribosome-recycling factor (184 aa).

Belongs to the RRF family.

Its subcellular location is the cytoplasm. In terms of biological role, responsible for the release of ribosomes from messenger RNA at the termination of protein biosynthesis. May increase the efficiency of translation by recycling ribosomes from one round of translation to another. The polypeptide is Ribosome-recycling factor (Caldicellulosiruptor bescii (strain ATCC BAA-1888 / DSM 6725 / KCTC 15123 / Z-1320) (Anaerocellum thermophilum)).